We begin with the raw amino-acid sequence, 69 residues long: Large ribosomal subunit protein uL29 (69 aa).

Belongs to the universal ribosomal protein uL29 family.

This is Large ribosomal subunit protein uL29 from Methylobacillus flagellatus (strain ATCC 51484 / DSM 6875 / VKM B-1610 / KT).